A 161-amino-acid polypeptide reads, in one-letter code: 3-isopropylmalate dehydratase small subunit (161 aa).

It belongs to the LeuD family. LeuD type 2 subfamily. As to quaternary structure, heterodimer of LeuC and LeuD.

It carries out the reaction (2R,3S)-3-isopropylmalate = (2S)-2-isopropylmalate. It participates in amino-acid biosynthesis; L-leucine biosynthesis; L-leucine from 3-methyl-2-oxobutanoate: step 2/4. Its function is as follows. Catalyzes the isomerization between 2-isopropylmalate and 3-isopropylmalate, via the formation of 2-isopropylmaleate. The polypeptide is 3-isopropylmalate dehydratase small subunit (Pyrobaculum calidifontis (strain DSM 21063 / JCM 11548 / VA1)).